A 502-amino-acid polypeptide reads, in one-letter code: Probable glycine dehydrogenase (decarboxylating) subunit 2 (502 aa).

The residue at position 273 (lysine 273) is an N6-(pyridoxal phosphate)lysine.

This sequence belongs to the GcvP family. C-terminal subunit subfamily. The glycine cleavage system is composed of four proteins: P, T, L and H. In this organism, the P 'protein' is a heterodimer of two subunits. The cofactor is pyridoxal 5'-phosphate.

It carries out the reaction N(6)-[(R)-lipoyl]-L-lysyl-[glycine-cleavage complex H protein] + glycine + H(+) = N(6)-[(R)-S(8)-aminomethyldihydrolipoyl]-L-lysyl-[glycine-cleavage complex H protein] + CO2. The glycine cleavage system catalyzes the degradation of glycine. The P protein binds the alpha-amino group of glycine through its pyridoxal phosphate cofactor; CO(2) is released and the remaining methylamine moiety is then transferred to the lipoamide cofactor of the H protein. The protein is Probable glycine dehydrogenase (decarboxylating) subunit 2 of Pyrococcus furiosus (strain ATCC 43587 / DSM 3638 / JCM 8422 / Vc1).